Here is a 245-residue protein sequence, read N- to C-terminus: 2,3-bisphosphoglycerate-dependent phosphoglycerate mutase (245 aa).

Residues 8–15 (RHGQSLWN), 21–22 (TG), R60, 87–90 (ERHY), K98, 114–115 (RR), and 183–184 (GN) each bind substrate. The active-site Tele-phosphohistidine intermediate is H9. E87 serves as the catalytic Proton donor/acceptor.

It belongs to the phosphoglycerate mutase family. BPG-dependent PGAM subfamily.

The catalysed reaction is (2R)-2-phosphoglycerate = (2R)-3-phosphoglycerate. The protein operates within carbohydrate degradation; glycolysis; pyruvate from D-glyceraldehyde 3-phosphate: step 3/5. Its function is as follows. Catalyzes the interconversion of 2-phosphoglycerate and 3-phosphoglycerate. In Bacillus cereus (strain AH187), this protein is 2,3-bisphosphoglycerate-dependent phosphoglycerate mutase.